The following is a 127-amino-acid chain: Glycine cleavage system H protein (127 aa).

The region spanning 24–105 (TLTVGVTDHA…AYAAWLFKLK (82 aa)) is the Lipoyl-binding domain. N6-lipoyllysine is present on Lys65.

The protein belongs to the GcvH family. The glycine cleavage system is composed of four proteins: P, T, L and H. (R)-lipoate serves as cofactor.

Its function is as follows. The glycine cleavage system catalyzes the degradation of glycine. The H protein shuttles the methylamine group of glycine from the P protein to the T protein. The polypeptide is Glycine cleavage system H protein (Azoarcus sp. (strain BH72)).